Reading from the N-terminus, the 104-residue chain is Large ribosomal subunit protein uL24 (104 aa).

It belongs to the universal ribosomal protein uL24 family. In terms of assembly, part of the 50S ribosomal subunit.

In terms of biological role, one of two assembly initiator proteins, it binds directly to the 5'-end of the 23S rRNA, where it nucleates assembly of the 50S subunit. Its function is as follows. One of the proteins that surrounds the polypeptide exit tunnel on the outside of the subunit. This chain is Large ribosomal subunit protein uL24, found in Sodalis glossinidius (strain morsitans).